Reading from the N-terminus, the 677-residue chain is Zinc finger CCCH domain-containing protein 23 (677 aa).

The tract at residues Pro-66–Gly-117 is disordered. The span at Ala-69–Pro-82 shows a compositional bias: low complexity. Residues Pro-98 to Met-113 show a composition bias toward polar residues. The C3H1-type zinc-finger motif lies at Gly-228 to Leu-255. In terms of domain architecture, RRM spans Arg-359–Lys-435. Positions Ala-480–Gln-513 form a coiled coil. A compositionally biased stretch (polar residues) spans Thr-535–Leu-562. A disordered region spans residues Thr-535–Ala-607. Basic and acidic residues predominate over residues Arg-589–Leu-601.

This Oryza sativa subsp. japonica (Rice) protein is Zinc finger CCCH domain-containing protein 23.